The sequence spans 383 residues: 1-deoxy-D-xylulose 5-phosphate reductoisomerase (383 aa).

NADPH-binding residues include T10, G11, S12, I13, N38, and N121. K122 contributes to the 1-deoxy-D-xylulose 5-phosphate binding site. E123 serves as a coordination point for NADPH. D147 serves as a coordination point for Mn(2+). The 1-deoxy-D-xylulose 5-phosphate site is built by S148, E149, S172, and H195. Mn(2+) is bound at residue E149. G201 is an NADPH binding site. Positions 208, 213, 214, and 217 each coordinate 1-deoxy-D-xylulose 5-phosphate. Mn(2+) is bound at residue E217.

The protein belongs to the DXR family. The cofactor is Mg(2+). Mn(2+) serves as cofactor.

It carries out the reaction 2-C-methyl-D-erythritol 4-phosphate + NADP(+) = 1-deoxy-D-xylulose 5-phosphate + NADPH + H(+). The protein operates within isoprenoid biosynthesis; isopentenyl diphosphate biosynthesis via DXP pathway; isopentenyl diphosphate from 1-deoxy-D-xylulose 5-phosphate: step 1/6. Functionally, catalyzes the NADPH-dependent rearrangement and reduction of 1-deoxy-D-xylulose-5-phosphate (DXP) to 2-C-methyl-D-erythritol 4-phosphate (MEP). This chain is 1-deoxy-D-xylulose 5-phosphate reductoisomerase, found in Vesicomyosocius okutanii subsp. Calyptogena okutanii (strain HA).